The chain runs to 282 residues: Pantothenate synthetase (282 aa).

Residue 30-37 (MGGLHQGH) coordinates ATP. The Proton donor role is filled by histidine 37. Glutamine 61 lines the (R)-pantoate pocket. Residue glutamine 61 participates in beta-alanine binding. Residue 146 to 149 (GQKD) coordinates ATP. Glutamine 152 serves as a coordination point for (R)-pantoate. ATP-binding positions include isoleucine 175 and 183–186 (MSTR).

Belongs to the pantothenate synthetase family. Homodimer.

The protein resides in the cytoplasm. The catalysed reaction is (R)-pantoate + beta-alanine + ATP = (R)-pantothenate + AMP + diphosphate + H(+). Its pathway is cofactor biosynthesis; (R)-pantothenate biosynthesis; (R)-pantothenate from (R)-pantoate and beta-alanine: step 1/1. In terms of biological role, catalyzes the condensation of pantoate with beta-alanine in an ATP-dependent reaction via a pantoyl-adenylate intermediate. In Vesicomyosocius okutanii subsp. Calyptogena okutanii (strain HA), this protein is Pantothenate synthetase.